The sequence spans 251 residues: MRRPMVAGNWKMHGTRASVAELIEGLVKQALPGSVDIAVMPASLFTSRVIEGLQGTSIIVGAQDAAIQAEQGALTGEIASSQLADAGCKLVLVGHSERRQLIGEQDEVLNKKFAAIQASGLTPVLCIGETLEERKAGQTLEVVGRQLDSVIAEFGIGALVNAVIAYEPVWAIGTGLTASPQEAQEVHAAIRAQLAKENAEVAQGVRLLYGGSVKAANAVELFSMPDIDGGLIGGASLNADEFGAICRAAGN.

9–11 (NWK) contributes to the substrate binding site. His95 serves as the catalytic Electrophile. Glu167 functions as the Proton acceptor in the catalytic mechanism. Residues Gly173, Ser212, and 233–234 (GG) contribute to the substrate site.

Belongs to the triosephosphate isomerase family. In terms of assembly, homodimer.

Its subcellular location is the cytoplasm. The enzyme catalyses D-glyceraldehyde 3-phosphate = dihydroxyacetone phosphate. The protein operates within carbohydrate biosynthesis; gluconeogenesis. Its pathway is carbohydrate degradation; glycolysis; D-glyceraldehyde 3-phosphate from glycerone phosphate: step 1/1. Functionally, involved in the gluconeogenesis. Catalyzes stereospecifically the conversion of dihydroxyacetone phosphate (DHAP) to D-glyceraldehyde-3-phosphate (G3P). In Pseudomonas syringae pv. tomato (strain ATCC BAA-871 / DC3000), this protein is Triosephosphate isomerase.